The chain runs to 163 residues: Glyoxalase domain-containing protein 5 (163 aa).

In terms of domain architecture, VOC spans 41 to 161; sequence HLDHLVLTVR…DDNLIEVSNY (121 aa).

Belongs to the glyoxalase I family.

In Danio rerio (Zebrafish), this protein is Glyoxalase domain-containing protein 5 (glod5).